The following is a 421-amino-acid chain: Putative aspartate aminotransferase, cytoplasmic 2 (421 aa).

Lys-249 is subject to N6-(pyridoxal phosphate)lysine.

It belongs to the class-I pyridoxal-phosphate-dependent aminotransferase family. In terms of assembly, homodimer. Pyridoxal 5'-phosphate serves as cofactor.

Its subcellular location is the cytoplasm. It catalyses the reaction L-aspartate + 2-oxoglutarate = oxaloacetate + L-glutamate. This Homo sapiens (Human) protein is Putative aspartate aminotransferase, cytoplasmic 2 (GOT1L1).